The chain runs to 208 residues: Protein-L-isoaspartate O-methyltransferase (208 aa).

The active site involves serine 59.

Belongs to the methyltransferase superfamily. L-isoaspartyl/D-aspartyl protein methyltransferase family.

The protein localises to the cytoplasm. The catalysed reaction is [protein]-L-isoaspartate + S-adenosyl-L-methionine = [protein]-L-isoaspartate alpha-methyl ester + S-adenosyl-L-homocysteine. Its function is as follows. Catalyzes the methyl esterification of L-isoaspartyl residues in peptides and proteins that result from spontaneous decomposition of normal L-aspartyl and L-asparaginyl residues. It plays a role in the repair and/or degradation of damaged proteins. In Salmonella paratyphi A (strain ATCC 9150 / SARB42), this protein is Protein-L-isoaspartate O-methyltransferase.